We begin with the raw amino-acid sequence, 110 residues long: Plasma membrane ATPase (110 aa).

Mg(2+) contacts are provided by Asp72 and Asp76. The interval 88-110 is disordered; it reads APESTSLNLPNDKELSEIAEQAK. Residues 98–110 show a composition bias toward basic and acidic residues; the sequence is NDKELSEIAEQAK.

This sequence belongs to the cation transport ATPase (P-type) (TC 3.A.3) family. Type IIIA subfamily. The N-terminus is blocked.

The protein localises to the cell membrane. It catalyses the reaction ATP + H2O + H(+)(in) = ADP + phosphate + 2 H(+)(out). Functionally, the plasma membrane ATPase of plants and fungi is a hydrogen ion pump. The proton gradient it generates drives the active transport of nutrients by H(+)-symport. The resulting external acidification and/or internal alkinization may mediate growth responses. In Avena sativa (Oat), this protein is Plasma membrane ATPase.